The sequence spans 500 residues: Protein DETOXIFICATION 29 (500 aa).

Helical transmembrane passes span 67 to 87 (GAITQVFAGHISTIALAAVSV), 91 to 111 (VVAGFSFGIMLGMGSALETLC), 132 to 152 (VILNVTALILSLLYIFAAPIL), 161 to 181 (ISSAAGIFSIYMIPQIFAYAI), 197 to 217 (VMAVISAVALVIHVPLTWFVI), 227 to 247 (LAVVLNASWCFIDMAQLVYIF), 277 to 297 (AVMLCLEVWYFMAIILFAGYL), 302 to 322 (ISVAALSICMNILGWTAMIAI), 349 to 369 (LVAVITSTLIGFIVSMILLIF), 393 to 413 (ILALSIVINNVQPVLSGVAVG), 419 to 439 (VVAYVNIACYYVFGIPFGLLL), and 449 to 469 (GIWCGMLTGTVVQTIVLTWMI).

It belongs to the multi antimicrobial extrusion (MATE) (TC 2.A.66.1) family.

It is found in the vacuole membrane. This is Protein DETOXIFICATION 29 from Arabidopsis thaliana (Mouse-ear cress).